Reading from the N-terminus, the 389-residue chain is S-adenosylmethionine synthase (389 aa).

Histidine 18 serves as a coordination point for ATP. Aspartate 20 contacts Mg(2+). Residue glutamate 46 participates in K(+) binding. 2 residues coordinate L-methionine: glutamate 59 and glutamine 103. The flexible loop stretch occupies residues 103–113 (QSADIAMGVDS). ATP-binding positions include 168-170 (DSK), aspartate 244, 250-251 (RK), alanine 267, and lysine 271. L-methionine is bound at residue aspartate 244. L-methionine is bound at residue lysine 275.

Belongs to the AdoMet synthase family. As to quaternary structure, homotetramer; dimer of dimers. It depends on Mg(2+) as a cofactor. The cofactor is K(+).

The protein resides in the cytoplasm. It carries out the reaction L-methionine + ATP + H2O = S-adenosyl-L-methionine + phosphate + diphosphate. It functions in the pathway amino-acid biosynthesis; S-adenosyl-L-methionine biosynthesis; S-adenosyl-L-methionine from L-methionine: step 1/1. Functionally, catalyzes the formation of S-adenosylmethionine (AdoMet) from methionine and ATP. The overall synthetic reaction is composed of two sequential steps, AdoMet formation and the subsequent tripolyphosphate hydrolysis which occurs prior to release of AdoMet from the enzyme. This is S-adenosylmethionine synthase from Pelagibacter ubique (strain HTCC1062).